The primary structure comprises 1040 residues: Nucleotide-binding oligomerization domain-containing protein 2 (1040 aa).

CARD domains follow at residues 26-122 and 126-218; these read CEMC…LHGC and HSLH…EAAT. The ATG16L1-binding motif motif lies at 63–77; it reads WEVLSWEDYEGFHLL. ADP-binding residues include threonine 239, tyrosine 252, threonine 253, glycine 302, serine 303, glycine 304, lysine 305, serine 306, and threonine 307. Residues 241-274 form a required for CARD9 binding region; sequence DGAETLCLEDIYTENVLEVWADVGMAGPPQKSPA. The NACHT domain occupies 293-618; sequence DTVLVVGEAG…FFAAFYLALS (326 aa). 299-306 contacts ATP; that stretch reads GEAGSGKS. Cysteine 395 carries the S-palmitoyl cysteine lipid modification. Histidine 603 contributes to the ADP binding site. LRR repeat units follow at residues 791 to 812, 816 to 839, 844 to 865, 872 to 884, 900 to 920, 928 to 949, 956 to 976, 984 to 1005, and 1012 to 1032; these read RPVA…QLLP, VCKA…IECA, QLQK…SMAK, NFLA…NYIT, SLQF…QALA, SLRW…ALAL, MLEE…CSLA, SLKI…ALLQ, and TILE…DKLG. Residue cysteine 1033 is the site of S-palmitoyl cysteine attachment.

The protein belongs to the NOD1-NOD2 family. Homooligomer: homooligomerizes following muramyl dipeptide (MDP)-binding, promoting RIPK2 recruitment. Interacts (via CARD domain) with RIPK2 (via CARD domain). Following RIPK2 recruitment, RIPK2 homooligomerizes via its CARD domain and forms long filaments named RIPosomes. Interacts (via CARD domain) with ubiquitin; inhibiting interaction with RIPK2. Component of a signaling complex consisting of ARHGEF2, NOD2 and RIPK2. Interacts with ANKRD17 (via N-terminus). Interacts with HSPA1A; the interaction enhances NOD2 stability. Interacts (via both CARD domains) with HSP90; the interaction enhances NOD2 stability. Interacts (via CARD domain) with SOCS3; the interaction promotes NOD2 degradation. Interacts (via CARD domain) with ERBIN; the interaction inhibits activation of NOD2. Interacts with MAPKBP1; the interaction is enhanced in the presence of muramyl dipeptide (MDP) and inhibits NOD2 homooligomerization and activation. Interacts with INAVA; the interaction takes place upon Pattern recognition receptor (PRR) stimulation. Interacts (via NACHT domain) with CARD9. Interacts (via CARD domain) with CASP1; this interaction leads to IL1B processing. Also interacts with CASP4. Interacts with NLRP1; this interaction is enhanced in the presence of muramyl dipeptide (MDP) and leads to increased IL1B release. Interacts with NLRP12; this interaction promotes degradation of NOD2 through the ubiquitin-proteasome pathway. Interacts with ANKHD1, C10orf67, CHMP5, DOCK7, ENTR1, KRT15, LDOC1, PPP1R12C, PPP2R3B, TRIM41 and VIM. Interacts with MAVS; interaction takes place following single-stranded RNA (ssRNA)-binding. Interacts with ATG16L1. Interacts with IRGM; promoting IRGM 'Lys-63'-linked polyubiquitination, which is required for interactions with the core autophagy factors. Post-translationally, palmitoylated by ZDHHC5; palmitoylation is required for proper recruitment to the bacterial entry site and hence for proper signaling upon cognate peptidoglycan detection. Palmitoylation promotes localization to the cell membrane. Palmitoylation protects from SQSTM1/p62-dependent autophagic degradation. Polyubiquitinated by TRIM27, leading to proteasome-mediated degradation. Polyubiquitinated and degraded following muramyl dipeptide (MDP) stimulation, conferring MDP tolerance and preventing septic shock. In terms of processing, degraded via selective autophagy following interaction with IRGM. IRGM promotes NOD2-RIPK2 RIPosome recruitment to autophagosome membranes, promoting their SQSTM1/p62-dependent autophagic degradation. Post-translationally, O-glycosylated by OGT, O-GlcNAcylation increases protein stability. Expressed in monocytes, macrophages, dendritic cells, hepatocytes, preadipocytes, epithelial cells of oral cavity, lung and intestine, with higher expression in ileal Paneth cells and in intestinal stem cells. As to expression, expressed at higher level in leukocytes.

It is found in the cell membrane. It localises to the basolateral cell membrane. The protein localises to the cytoplasm. The protein resides in the mitochondrion. Its activity is regulated as follows. ADP-binding promotes an inactive closed conformation. In terms of biological role, pattern recognition receptor (PRR) that detects bacterial peptidoglycan fragments and other danger signals and plays an important role in gastrointestinal immunity. Specifically activated by muramyl dipeptide (MDP), a fragment of bacterial peptidoglycan found in every bacterial peptidoglycan type. NOD2 specifically recognizes and binds 6-O-phospho-MDP, the phosphorylated form of MDP, which is generated by NAGK. 6-O-phospho-MDP-binding triggers oligomerization that facilitates the binding and subsequent activation of the proximal adapter receptor-interacting RIPK2. Following recruitment, RIPK2 undergoes 'Met-1'- (linear) and 'Lys-63'-linked polyubiquitination by E3 ubiquitin-protein ligases XIAP, BIRC2, BIRC3 and the LUBAC complex, becoming a scaffolding protein for downstream effectors, triggering activation of the NF-kappa-B and MAP kinases signaling. This in turn leads to the transcriptional activation of hundreds of genes involved in immune response. Its ability to detect bacterial MDP plays a central role in maintaining the equilibrium between intestinal microbiota and host immune responses to control inflammation. An imbalance in this relationship results in dysbiosis, whereby pathogenic bacteria prevail on commensals, causing damage in the intestinal epithelial barrier as well as allowing bacterial invasion and inflammation. Acts as a regulator of appetite by sensing MDP in a subset of brain neurons: microbiota-derived MDP reach the brain, where they bind and activate NOD2 in inhibitory hypothalamic neurons, decreasing neuronal activity, thereby regulating satiety and body temperature. NOD2-dependent MDP-sensing of bacterial cell walls in the intestinal epithelial compartment contributes to sustained postnatal growth upon undernutrition. Also plays a role in antiviral response by acting as a sensor of single-stranded RNA (ssRNA) from viruses: upon ssRNA-binding, interacts with MAVS, leading to activation of interferon regulatory factor-3/IRF3 and expression of type I interferon. Also acts as a regulator of autophagy in dendritic cells via its interaction with ATG16L1, possibly by recruiting ATG16L1 at the site of bacterial entry. NOD2 activation in the small intestine crypt also contributes to intestinal stem cells survival and function: acts by promoting mitophagy via its association with ATG16L1. In addition to its main role in innate immunity, also regulates the adaptive immune system by acting as regulator of helper T-cell and regulatory T-cells (Tregs). Besides recognizing pathogens, also involved in the endoplasmic reticulum stress response: acts by sensing and binding to the cytosolic metabolite sphingosine-1-phosphate generated in response to endoplasmic reticulum stress, initiating an inflammation process that leads to activation of the NF-kappa-B and MAP kinases signaling. May also be involved in NLRP1 activation following activation by MDP, leading to CASP1 activation and IL1B release in macrophages. Acts as a pattern recognition receptor (PRR); able to activate NF-kappa-B. Its function is as follows. Can activate NF-kappa-B in a muramyl dipeptide (MDP)-independent manner. The sequence is that of Nucleotide-binding oligomerization domain-containing protein 2 from Homo sapiens (Human).